Reading from the N-terminus, the 501-residue chain is Ribose import ATP-binding protein RbsA (501 aa).

ABC transporter domains lie at 8-245 (LKMV…VGRT) and 255-500 (VKKG…VGIN). An ATP-binding site is contributed by 40-47 (GENGAGKS).

It belongs to the ABC transporter superfamily. Ribose importer (TC 3.A.1.2.1) family. In terms of assembly, the complex is composed of an ATP-binding protein (RbsA), two transmembrane proteins (RbsC) and a solute-binding protein (RbsB).

It localises to the cell membrane. It carries out the reaction D-ribose(out) + ATP + H2O = D-ribose(in) + ADP + phosphate + H(+). Its function is as follows. Part of the ABC transporter complex RbsABC involved in ribose import. Responsible for energy coupling to the transport system. The protein is Ribose import ATP-binding protein RbsA of Clostridium perfringens (strain SM101 / Type A).